The following is a 315-amino-acid chain: Glutathione synthetase (315 aa).

The region spanning 125–310 (KLFTAWFSDL…ITGMLMDAIE (186 aa)) is the ATP-grasp domain. A glycan (N-beta-linked (GlcNAc) arginine) is linked at arginine 256. Mg(2+) contacts are provided by glutamate 281 and asparagine 283.

It belongs to the prokaryotic GSH synthase family. It depends on Mg(2+) as a cofactor. Mn(2+) serves as cofactor. In terms of processing, glycosylation at Arg-256 by NleB enhances the glutathione synthetase activity, leading to an increase in glutathione production. Glycosylation may promote C.rodentium survival in oxidative stress conditions.

The catalysed reaction is gamma-L-glutamyl-L-cysteine + glycine + ATP = glutathione + ADP + phosphate + H(+). It functions in the pathway sulfur metabolism; glutathione biosynthesis; glutathione from L-cysteine and L-glutamate: step 2/2. In Citrobacter rodentium, this protein is Glutathione synthetase.